The primary structure comprises 154 residues: 17 kDa surface antigen (154 aa).

The first 19 residues, 1-19, serve as a signal peptide directing secretion; sequence MKLLSKIMIIALAASTLQA. Residue C20 is the site of N-palmitoyl cysteine attachment. The S-diacylglycerol cysteine moiety is linked to residue C20.

Belongs to the rickettsiale 17 kDa surface antigen family.

The protein resides in the cell outer membrane. The sequence is that of 17 kDa surface antigen (omp) from Rickettsia amblyommatis (Rickettsia amblyommii).